We begin with the raw amino-acid sequence, 731 residues long: Endopolyphosphatase (731 aa).

The Cytoplasmic portion of the chain corresponds to 1–4 (MSLS). Residues 5–25 (RCILGLACLWHGVIASPLGAV) form a helical; Signal-anchor for type II membrane protein membrane-spanning segment. Over 26 to 731 (PSNIPIATDL…VEKEDLKKFT (706 aa)) the chain is Vacuolar. Asn-106 is a glycosylation site (N-linked (GlcNAc...) asparagine). Residues 375 to 403 (KLQPPPTDSKNSGQLKKGKKGRKGKKKKP) form a disordered region. Positions 390–402 (KKGKKGRKGKKKK) are enriched in basic residues. The N-linked (GlcNAc...) asparagine glycan is linked to Asn-433. Residues 456 to 522 (EQNDRQKHLD…PPGPAYSPQP (67 aa)) form a disordered region. Composition is skewed to basic and acidic residues over residues 457-474 (QNDR…PSHM) and 492-501 (GGDSKPKKPD). Over residues 505 to 519 (PHPPAKSSPPGPAYS) the composition is skewed to pro residues. Residues Asn-534 and Asn-540 are each glycosylated (N-linked (GlcNAc...) asparagine). Residues 626–706 (AKSIDVSYES…HKKKKGKKRQ (81 aa)) form a disordered region. A compositionally biased stretch (acidic residues) spans 636–686 (AAEEEEEEEEEEEEDLFEEVEETDEEEEQEDDDLSDGEEVDDDSDEDELET). Over residues 691 to 706 (KHDKKKHKKKKGKKRQ) the composition is skewed to basic residues.

This sequence belongs to the endopolyphosphatase PPN1 family. Requires a divalent metal cation as cofactor. Processing by proteases in the vacuole may be required for activation.

The protein resides in the vacuole membrane. It carries out the reaction [phosphate](n+1) + n H2O = (n+1) phosphate + n H(+). Catalyzes the hydrolysis of inorganic polyphosphate (polyP) chains of many hundreds of phosphate residues into shorter lengths. The chain is Endopolyphosphatase (epp-1) from Neurospora crassa (strain ATCC 24698 / 74-OR23-1A / CBS 708.71 / DSM 1257 / FGSC 987).